Here is a 227-residue protein sequence, read N- to C-terminus: uncharacterized protein (227 aa).

One can recognise an AMMECR1 domain in the interval 5–220 (TSSPYAFYAF…IAWDEFETGL (216 aa)).

This is an uncharacterized protein from Kluyveromyces lactis (strain ATCC 8585 / CBS 2359 / DSM 70799 / NBRC 1267 / NRRL Y-1140 / WM37) (Yeast).